The following is a 431-amino-acid chain: Tyrosine--tRNA ligase (431 aa).

Tyr33 is a binding site for L-tyrosine. The 'HIGH' region motif lies at 38–47; the sequence is PTADSLHIGS. The L-tyrosine site is built by Tyr172 and Gln176. Residues 234-238 carry the 'KMSKS' region motif; that stretch reads KFGKS. Lys237 provides a ligand contact to ATP. Residues 364-431 enclose the S4 RNA-binding domain; sequence LDIVTVLNEK…KKNYFVIRVV (68 aa).

It belongs to the class-I aminoacyl-tRNA synthetase family. TyrS type 1 subfamily. Homodimer.

It localises to the cytoplasm. It carries out the reaction tRNA(Tyr) + L-tyrosine + ATP = L-tyrosyl-tRNA(Tyr) + AMP + diphosphate + H(+). Functionally, catalyzes the attachment of tyrosine to tRNA(Tyr) in a two-step reaction: tyrosine is first activated by ATP to form Tyr-AMP and then transferred to the acceptor end of tRNA(Tyr). This Flavobacterium johnsoniae (strain ATCC 17061 / DSM 2064 / JCM 8514 / BCRC 14874 / CCUG 350202 / NBRC 14942 / NCIMB 11054 / UW101) (Cytophaga johnsonae) protein is Tyrosine--tRNA ligase.